A 160-amino-acid polypeptide reads, in one-letter code: Eosinophil cationic protein (160 aa).

The signal sequence occupies residues 1–27; that stretch reads MVPKLFTPQICLLLLLGLMGVEGSLHA. Positions 28-72 are required for nearly all of the bactericidal activities; partially involved in LPS-binding; sequence RPPQFTKAQWFAIQHINVNPPRCTIAMRVINNYQRRCKNQNTFLR. The active-site Proton acceptor is histidine 42. Disulfide bonds link cysteine 50–cysteine 110, cysteine 64–cysteine 123, cysteine 82–cysteine 138, and cysteine 89–cysteine 98. Tyrosine 60 bears the 3'-nitrotyrosine mark. Residue 65–69 coordinates substrate; that stretch reads KNQNT. N-linked (GlcNAc...) asparagine glycans are attached at residues asparagine 84, asparagine 92, and asparagine 119. Catalysis depends on histidine 155, which acts as the Proton donor.

It belongs to the pancreatic ribonuclease family. As to quaternary structure, interacts with bacterial lipopolysaccharide (LPS) and lipoteichoic acid (LTA). In vitro interacts with phospholipid bilayers.

The protein resides in the secreted. Cytotoxin and helminthotoxin with low-efficiency ribonuclease activity. Possesses a wide variety of biological activities. Exhibits antibacterial activity. This chain is Eosinophil cationic protein (RNASE3), found in Macaca nemestrina (Pig-tailed macaque).